Consider the following 557-residue polypeptide: Nucleoporin AMO1 (557 aa).

The segment at 1–25 (MTVCRFWQQGYCRNGNACKFEHPPK) adopts a C3H1-type zinc-finger fold. Residues 114–141 (QGALNEIQAAYQAAQQQIQNTLQNIPAA) are a coiled coil. A disordered region spans residues 161 to 297 (ESSKGSSTGG…SALGPKPGAF (137 aa)). SXFG repeat units lie at residues 171-174 (SVFG), 200-203 (SAFG), 213-216 (SAFG), 228-231 (SAFG), 240-243 (SAFG), 249-252 (STFG), 262-265 (SAFG), 282-285 (SAFG), 303-306 (SAFG), and 314-317 (SPFG). Positions 195 to 215 (STPSTSAFGQPSPLGQKSSAF) are enriched in polar residues. Over residues 243–253 (GSPQTGSTFGQ) the composition is skewed to polar residues. The tract at residues 315-463 (PFGAAAQATQ…DLLSYATKNP (149 aa)) is disordered. Composition is skewed to polar residues over residues 321 to 338 (QATQPANPFGQPSQQAAN) and 351 to 366 (GQPSTTTAQNPFGQPS). SXFG repeat units follow at residues 348–351 (SAFG), 370–373 (SAFG), 387–390 (SLFG), and 407–410 (SAFG). Low complexity predominate over residues 367–385 (TQSSAFGQQQPQQAGTFGS). A compositionally biased stretch (polar residues) spans 388–429 (LFGQQQQQPSNVFGQPSTTSAFGSQAATSGFSQLGNATSTIG). Low complexity predominate over residues 430–443 (ASPAGAQAPASKSP).

The nuclear pore complex (NPC) constitutes the exclusive means of nucleocytoplasmic transport. NPCs allow the passive diffusion of ions and small molecules and the active, nuclear transport receptor-mediated bidirectional transport of macromolecules such as proteins, RNAs, ribonucleoparticles (RNPs), and ribosomal subunits across the nuclear envelope. The 55-60 MDa NPC is composed of at least 28 different subunits: AMO1, ELYS, GLE1, GLE2, MLP1, NDC1, NIC96, NSP1, NUP133, NUP145, NUP152, NUP159, NUP170, NUP188, NUP192, NUP37, NUP49, NUP53, NUP56, NUP57, NUP82, NUP84, NUP85, POM152, POM33, POM34, SEC13 and SEH1. Due to its 8-fold rotational symmetry, all subunits are present with 8 copies or multiples thereof.

The protein resides in the nucleus. It is found in the nuclear pore complex. It localises to the nucleus membrane. Its function is as follows. Functions as a component of the nuclear pore complex (NPC). NPC components, collectively referred to as nucleoporins (NUPs), can play the role of both NPC structural components and of docking or interaction partners for transiently associated nuclear transport factors. Active directional transport is assured by both, a Phe-Gly (FG) repeat affinity gradient for these transport factors across the NPC and a transport cofactor concentration gradient across the nuclear envelope (GSP1 and GSP2 GTPases associated predominantly with GTP in the nucleus, with GDP in the cytoplasm). AMO1 is specifically important for nuclear protein and mRNA export. This Chaetomium thermophilum (strain DSM 1495 / CBS 144.50 / IMI 039719) (Thermochaetoides thermophila) protein is Nucleoporin AMO1 (AMO1).